A 250-amino-acid chain; its full sequence is NADH-quinone oxidoreductase subunit C (250 aa).

The protein belongs to the complex I 30 kDa subunit family. In terms of assembly, NDH-1 is composed of 14 different subunits. Subunits NuoB, C, D, E, F, and G constitute the peripheral sector of the complex.

The protein localises to the cell inner membrane. The catalysed reaction is a quinone + NADH + 5 H(+)(in) = a quinol + NAD(+) + 4 H(+)(out). Its function is as follows. NDH-1 shuttles electrons from NADH, via FMN and iron-sulfur (Fe-S) centers, to quinones in the respiratory chain. The immediate electron acceptor for the enzyme in this species is believed to be ubiquinone. Couples the redox reaction to proton translocation (for every two electrons transferred, four hydrogen ions are translocated across the cytoplasmic membrane), and thus conserves the redox energy in a proton gradient. In Xanthomonas oryzae pv. oryzae (strain PXO99A), this protein is NADH-quinone oxidoreductase subunit C.